We begin with the raw amino-acid sequence, 524 residues long: Sexual development regulator velC (524 aa).

4 disordered regions span residues 114-195, 322-349, 380-413, and 503-524; these read NRVL…PVHS, PGSGSGAGSSDTNTNSNDKSRHESMSSY, VDEEPDPNTAPAHPSSTDDSTYDASPRTVTHRFR, and GMGKGRRVGIGSSKVSSRARVE. Composition is skewed to polar residues over residues 131–153 and 178–195; these read TTGSLAQYSIQRPSTSRNMENAG and LDSQYSGSTTAFPSPVHS. The Velvet domain occupies 248–500; sequence SSSSRYRLFI…ELGFVELKTR (253 aa). Residues 393 to 402 are compositionally biased toward polar residues; the sequence is PSSTDDSTYD.

It belongs to the velvet family. VelC subfamily. In terms of assembly, interacts with vosA.

Its subcellular location is the nucleus. Functionally, velvet-domain-containing protein that acts as a positive regulator of sexual development. Positively regulates the production of the sexual fruiting bodies called cleistothecia. The polypeptide is Sexual development regulator velC (Emericella nidulans (strain FGSC A4 / ATCC 38163 / CBS 112.46 / NRRL 194 / M139) (Aspergillus nidulans)).